The following is an 85-amino-acid chain: Phosphocarrier protein HPr (85 aa).

An HPr domain is found at 1 to 85 (MFQKEIKINA…HLSKIMTELE (85 aa)). Histidine 15 functions as the Pros-phosphohistidine intermediate in the catalytic mechanism.

Belongs to the HPr family.

Its subcellular location is the cytoplasm. Its function is as follows. General (non sugar-specific) component of the phosphoenolpyruvate-dependent sugar phosphotransferase system (sugar PTS). This major carbohydrate active-transport system catalyzes the phosphorylation of incoming sugar substrates concomitantly with their translocation across the cell membrane. The phosphoryl group from phosphoenolpyruvate (PEP) is transferred to the phosphoryl carrier protein HPr by enzyme I. Phospho-HPr then transfers it to the PTS EIIA domain. In Buchnera aphidicola subsp. Schizaphis graminum (strain Sg), this protein is Phosphocarrier protein HPr (ptsH).